A 448-amino-acid chain; its full sequence is Putative flavin-containing monooxygenase FMO GS-OX-like 10 (448 aa).

18-23 (GAGAAG) lines the FAD pocket. 212–217 (GSSVSG) contacts NADP(+).

This sequence belongs to the FMO family. FAD serves as cofactor.

Its function is as follows. Catalyzes the conversion of methylthioalkyl glucosinolates of any chain length into methylsulfinylalkyl glucosinolates. The chain is Putative flavin-containing monooxygenase FMO GS-OX-like 10 from Arabidopsis thaliana (Mouse-ear cress).